The following is a 91-amino-acid chain: Dynein 8 kDa light chain, flagellar outer arm (91 aa).

It belongs to the dynein light chain family. In terms of assembly, consists of at least 3 heavy chains (alpha, beta and gamma), 2 intermediate chains and 8 light chains.

The protein resides in the cytoplasm. It localises to the cytoskeleton. Its subcellular location is the flagellum axoneme. This is Dynein 8 kDa light chain, flagellar outer arm from Chlamydomonas reinhardtii (Chlamydomonas smithii).